We begin with the raw amino-acid sequence, 364 residues long: Peptidoglycan transport system permease protein YejB (364 aa).

A run of 6 helical transmembrane segments spans residues 9–29, 134–154, 171–191, 219–239, 283–303, and 325–345; these read LALMIPTIVGIMGISFLVIQF, SASLGFWILIISYVISIPLGI, IIIIGYAVPSFLFGILLIVLF, IIDYFWHLTLPLIALSLSAFA, IVIAGFPGAFISAFFTGSLLI, and YPIVFGTLFIFSLMGLVVGLL. The ABC transmembrane type-1 domain maps to 131–350; that stretch reads LPVSASLGFW…VVGLLSDLIY (220 aa).

This sequence belongs to the binding-protein-dependent transport system permease family. As to quaternary structure, the complex is composed of one ATP-binding protein (YejF), two transmembrane proteins (YejB and YejE) and a solute-binding protein (YepA or YejA).

It localises to the cell inner membrane. Part of the ABC transporter complex YejBEF-YepA involved in the uptake of muropeptides, the breakdown products of cell wall peptidoglycan. The import of muropeptides into the cell enables peptidoglycan recycling, which is vital for cell wall integrity in this bacterium. Is also probably part of the ABC transporter complex YejABEF, which is likely involved in broad-spectrum peptide import. Responsible for the translocation of the substrate across the membrane. The protein is Peptidoglycan transport system permease protein YejB of Agrobacterium fabrum (strain C58 / ATCC 33970) (Agrobacterium tumefaciens (strain C58)).